The following is a 499-amino-acid chain: Maturase K (499 aa).

The protein belongs to the intron maturase 2 family. MatK subfamily.

Its subcellular location is the plastid. The protein localises to the chloroplast. In terms of biological role, usually encoded in the trnK tRNA gene intron. Probably assists in splicing its own and other chloroplast group II introns. The protein is Maturase K of Chamaecrista fasciculata (Showy partridge pea).